A 148-amino-acid chain; its full sequence is Antigen GM6 (148 aa).

Residues 1 to 22 (KLKASDSRSFLDPMPEGVPLSE) are disordered. Tandem repeats lie at residues 1 to 68 (KLKA…HELA) and 69 to 136 (KLKA…HELA). The stretch at 137–148 (KLKASDSRSFQS) is one 3; truncated repeat.

Its subcellular location is the cytoplasm. It localises to the cytoskeleton. This chain is Antigen GM6 (GM6), found in Trypanosoma brucei gambiense.